Reading from the N-terminus, the 213-residue chain is Pyridoxine/pyridoxamine 5'-phosphate oxidase (213 aa).

Residues 9 to 12 (RKDY) and lysine 67 each bind substrate. FMN is bound by residues 62-67 (RIVLLK), 77-78 (FT), arginine 83, lysine 84, and glutamine 106. Tyrosine 124, arginine 128, and serine 132 together coordinate substrate. FMN-binding positions include 141–142 (QS) and tryptophan 186. Residue 192–194 (RLH) participates in substrate binding. Arginine 196 provides a ligand contact to FMN.

It belongs to the pyridoxamine 5'-phosphate oxidase family. In terms of assembly, homodimer. The cofactor is FMN.

The catalysed reaction is pyridoxamine 5'-phosphate + O2 + H2O = pyridoxal 5'-phosphate + H2O2 + NH4(+). It carries out the reaction pyridoxine 5'-phosphate + O2 = pyridoxal 5'-phosphate + H2O2. It functions in the pathway cofactor metabolism; pyridoxal 5'-phosphate salvage; pyridoxal 5'-phosphate from pyridoxamine 5'-phosphate: step 1/1. It participates in cofactor metabolism; pyridoxal 5'-phosphate salvage; pyridoxal 5'-phosphate from pyridoxine 5'-phosphate: step 1/1. Functionally, catalyzes the oxidation of either pyridoxine 5'-phosphate (PNP) or pyridoxamine 5'-phosphate (PMP) into pyridoxal 5'-phosphate (PLP). The protein is Pyridoxine/pyridoxamine 5'-phosphate oxidase of Cyanothece sp. (strain PCC 7425 / ATCC 29141).